Consider the following 344-residue polypeptide: MSVVVRHDWDRKELQALFDLPFPELLHRAASVHRAHFDPAQVQVSTLLSVKTGGCPEDCAYCPQAQRYDTGVSAQKLMETEEVVAKARQAKAAGASRFCMGAAWRSPKERDIPKVAAMIREVKAMGLETCATLGMLDAGQARALKDAGLDYYNHNLDTAPDYYDSIIHTRQYQDRLNTLEHVRDVGLKTCCGGIVGMGETREHRVGLLLALATLPAHPDSVPINQLVQVPGTPLHGTQQLDPFEFVRMIAVARIAMPKSMVRLSAGREAMSDELQALCFLAGANSIFYGEKLLTTGNPDTERDQALFQRLGLRPMQITVDAAEHDHPGTVHAEITRSAACEHAA.

Residues 40–267 (AQVQVSTLLS…KSMVRLSAGR (228 aa)) form the Radical SAM core domain. [4Fe-4S] cluster is bound by residues Cys55, Cys59, and Cys62. Positions 99, 130, 190, and 262 each coordinate [2Fe-2S] cluster.

Belongs to the radical SAM superfamily. Biotin synthase family. Homodimer. The cofactor is [4Fe-4S] cluster. It depends on [2Fe-2S] cluster as a cofactor.

It catalyses the reaction (4R,5S)-dethiobiotin + (sulfur carrier)-SH + 2 reduced [2Fe-2S]-[ferredoxin] + 2 S-adenosyl-L-methionine = (sulfur carrier)-H + biotin + 2 5'-deoxyadenosine + 2 L-methionine + 2 oxidized [2Fe-2S]-[ferredoxin]. Its pathway is cofactor biosynthesis; biotin biosynthesis; biotin from 7,8-diaminononanoate: step 2/2. In terms of biological role, catalyzes the conversion of dethiobiotin (DTB) to biotin by the insertion of a sulfur atom into dethiobiotin via a radical-based mechanism. The polypeptide is Biotin synthase (Xanthomonas euvesicatoria pv. vesicatoria (strain 85-10) (Xanthomonas campestris pv. vesicatoria)).